A 356-amino-acid polypeptide reads, in one-letter code: MTKIAFTGGGTVGHVSVNLSLIPTALSQGYEALYIGSKNGIEREMIESQLPEIKYYPISSGKLRRYISLENAKDVFKVLKGILDARKVLKKEKPDLLFSKGGFVSVPVVIAAKSLNIPTIIHESDLTPGLANKIALKFAKKIYTTFEETLNYLPKEKADFIGATIREDLKNGNAHSGYQLTGFNENKKVLLVMGGSLGSKKLNSIIRENLDALLQQYQVIHLTGKGLKDNQVKKSGYIQYEFVKEDLTDLLAITDTVISRAGSNAIYEFLTLRIPMLLVPLGLDQSRGDQIDNANHFADKGYAKAIDEEQLTVQILLQELNEMEQERTRIINNMKSYEQSYTKEALFDKMIKDALN.

The UDP-N-acetyl-alpha-D-glucosamine site is built by Arg-166, Ser-196, and Gln-290.

It belongs to the glycosyltransferase 28 family. MurG subfamily.

The protein localises to the cell membrane. It catalyses the reaction Mur2Ac(oyl-L-Ala-gamma-D-Glu-L-Lys-D-Ala-D-Ala)-di-trans,octa-cis-undecaprenyl diphosphate + UDP-N-acetyl-alpha-D-glucosamine = beta-D-GlcNAc-(1-&gt;4)-Mur2Ac(oyl-L-Ala-gamma-D-Glu-L-Lys-D-Ala-D-Ala)-di-trans,octa-cis-undecaprenyl diphosphate + UDP + H(+). Its pathway is cell wall biogenesis; peptidoglycan biosynthesis. Functionally, cell wall formation. Catalyzes the transfer of a GlcNAc subunit on undecaprenyl-pyrophosphoryl-MurNAc-pentapeptide (lipid intermediate I) to form undecaprenyl-pyrophosphoryl-MurNAc-(pentapeptide)GlcNAc (lipid intermediate II). The polypeptide is UDP-N-acetylglucosamine--N-acetylmuramyl-(pentapeptide) pyrophosphoryl-undecaprenol N-acetylglucosamine transferase (Staphylococcus aureus (strain bovine RF122 / ET3-1)).